The following is a 159-amino-acid chain: ATP synthase subunit b (159 aa).

A helical membrane pass occupies residues 7 to 27; it reads VIFMTIINFCILVAILKHFFW.

This sequence belongs to the ATPase B chain family. F-type ATPases have 2 components, F(1) - the catalytic core - and F(0) - the membrane proton channel. F(1) has five subunits: alpha(3), beta(3), gamma(1), delta(1), epsilon(1). F(0) has three main subunits: a(1), b(2) and c(10-14). The alpha and beta chains form an alternating ring which encloses part of the gamma chain. F(1) is attached to F(0) by a central stalk formed by the gamma and epsilon chains, while a peripheral stalk is formed by the delta and b chains.

Its subcellular location is the cell membrane. Its function is as follows. F(1)F(0) ATP synthase produces ATP from ADP in the presence of a proton or sodium gradient. F-type ATPases consist of two structural domains, F(1) containing the extramembraneous catalytic core and F(0) containing the membrane proton channel, linked together by a central stalk and a peripheral stalk. During catalysis, ATP synthesis in the catalytic domain of F(1) is coupled via a rotary mechanism of the central stalk subunits to proton translocation. Functionally, component of the F(0) channel, it forms part of the peripheral stalk, linking F(1) to F(0). This is ATP synthase subunit b from Clostridium botulinum (strain Alaska E43 / Type E3).